We begin with the raw amino-acid sequence, 206 residues long: Small ribosomal subunit protein uS4 (206 aa).

Residues 96 to 156 enclose the S4 RNA-binding domain; sequence GRLDNVVYRM…EKAKKQSRVK (61 aa).

This sequence belongs to the universal ribosomal protein uS4 family. As to quaternary structure, part of the 30S ribosomal subunit. Contacts protein S5. The interaction surface between S4 and S5 is involved in control of translational fidelity.

Its function is as follows. One of the primary rRNA binding proteins, it binds directly to 16S rRNA where it nucleates assembly of the body of the 30S subunit. Functionally, with S5 and S12 plays an important role in translational accuracy. The sequence is that of Small ribosomal subunit protein uS4 from Salmonella agona (strain SL483).